Here is a 591-residue protein sequence, read N- to C-terminus: Aspartate--tRNA(Asp/Asn) ligase (591 aa).

An L-aspartate-binding site is contributed by Glu174. The segment at 198–201 (QLFK) is aspartate. Arg220 serves as a coordination point for L-aspartate. ATP-binding positions include 220 to 222 (RDE) and Gln229. His450 serves as a coordination point for L-aspartate. Glu483 contributes to the ATP binding site. Arg490 contributes to the L-aspartate binding site. An ATP-binding site is contributed by 535–538 (GLDR).

This sequence belongs to the class-II aminoacyl-tRNA synthetase family. Type 1 subfamily. As to quaternary structure, homodimer.

It is found in the cytoplasm. The catalysed reaction is tRNA(Asx) + L-aspartate + ATP = L-aspartyl-tRNA(Asx) + AMP + diphosphate. Functionally, aspartyl-tRNA synthetase with relaxed tRNA specificity since it is able to aspartylate not only its cognate tRNA(Asp) but also tRNA(Asn). Reaction proceeds in two steps: L-aspartate is first activated by ATP to form Asp-AMP and then transferred to the acceptor end of tRNA(Asp/Asn). This chain is Aspartate--tRNA(Asp/Asn) ligase, found in Pseudomonas putida (strain GB-1).